The chain runs to 286 residues: Phosphatidylserine decarboxylase proenzyme (286 aa).

Catalysis depends on charge relay system; for autoendoproteolytic cleavage activity residues aspartate 90, histidine 147, and serine 252. Serine 252 acts as the Schiff-base intermediate with substrate; via pyruvic acid; for decarboxylase activity in catalysis. The residue at position 252 (serine 252) is a Pyruvic acid (Ser); by autocatalysis.

Belongs to the phosphatidylserine decarboxylase family. PSD-B subfamily. Prokaryotic type I sub-subfamily. Heterodimer of a large membrane-associated beta subunit and a small pyruvoyl-containing alpha subunit. Pyruvate serves as cofactor. Is synthesized initially as an inactive proenzyme. Formation of the active enzyme involves a self-maturation process in which the active site pyruvoyl group is generated from an internal serine residue via an autocatalytic post-translational modification. Two non-identical subunits are generated from the proenzyme in this reaction, and the pyruvate is formed at the N-terminus of the alpha chain, which is derived from the carboxyl end of the proenzyme. The autoendoproteolytic cleavage occurs by a canonical serine protease mechanism, in which the side chain hydroxyl group of the serine supplies its oxygen atom to form the C-terminus of the beta chain, while the remainder of the serine residue undergoes an oxidative deamination to produce ammonia and the pyruvoyl prosthetic group on the alpha chain. During this reaction, the Ser that is part of the protease active site of the proenzyme becomes the pyruvoyl prosthetic group, which constitutes an essential element of the active site of the mature decarboxylase.

It localises to the cell membrane. It carries out the reaction a 1,2-diacyl-sn-glycero-3-phospho-L-serine + H(+) = a 1,2-diacyl-sn-glycero-3-phosphoethanolamine + CO2. Its pathway is phospholipid metabolism; phosphatidylethanolamine biosynthesis; phosphatidylethanolamine from CDP-diacylglycerol: step 2/2. Functionally, catalyzes the formation of phosphatidylethanolamine (PtdEtn) from phosphatidylserine (PtdSer). The protein is Phosphatidylserine decarboxylase proenzyme of Pseudomonas fluorescens (strain SBW25).